A 1136-amino-acid chain; its full sequence is Unconventional myosin-Ib (1136 aa).

Residues 15–701 (IGVGDMVLLE…TLFKLEDLRK (687 aa)) enclose the Myosin motor domain. The residue at position 60 (Ser-60) is a Phosphoserine. 108–115 (GESGAGKT) is an ATP binding site. Lys-287 participates in a covalent cross-link: Glycyl lysine isopeptide (Lys-Gly) (interchain with G-Cter in SUMO1); alternate. A Glycyl lysine isopeptide (Lys-Gly) (interchain with G-Cter in SUMO2); alternate cross-link involves residue Lys-287. The actin-binding stretch occupies residues 578–600 (VATLMKNLQTKNPNYIRCIKPND). IQ domains are found at residues 704–733 (LEDL…SQIV), 728–748 (KKSQ…KRYQ), 750–779 (TKSS…QKRC), 779–808 (CKEA…EARN), 808–837 (NKHA…EARR), and 837–866 (RKHA…ANAG). Residues 952-1136 (KALYPSSVGQ…NNRLLEVAVP (185 aa)) enclose the TH1 domain.

Belongs to the TRAFAC class myosin-kinesin ATPase superfamily. Myosin family.

Motor protein that may participate in process critical to neuronal development and function such as cell migration, neurite outgrowth and vesicular transport. This chain is Unconventional myosin-Ib (MYO1B), found in Homo sapiens (Human).